The primary structure comprises 371 residues: Cytochrome b (371 aa).

4 consecutive transmembrane segments (helical) span residues 25-45 (FGSM…FLAI), 69-90 (WTMQ…YIHI), 105-125 (WLSG…GYVL), and 170-190 (FFAL…AHIM). Histidine 75 and histidine 89 together coordinate heme b. Histidine 174 and histidine 188 together coordinate heme b. Histidine 193 contacts a ubiquinone. 4 consecutive transmembrane segments (helical) span residues 218–238 (NKDM…LSFL), 280–300 (LGGT…PFTH), 312–332 (MTQT…WTAT), and 339–358 (FMFI…FMNP).

It belongs to the cytochrome b family. The cytochrome bc1 complex contains 3 respiratory subunits (MT-CYB, CYC1 and UQCRFS1), 2 core proteins (UQCRC1 and UQCRC2) and probably 6 low-molecular weight proteins. Heme b is required as a cofactor.

It localises to the mitochondrion inner membrane. Its function is as follows. Component of the ubiquinol-cytochrome c reductase complex (complex III or cytochrome b-c1 complex) that is part of the mitochondrial respiratory chain. The b-c1 complex mediates electron transfer from ubiquinol to cytochrome c. Contributes to the generation of a proton gradient across the mitochondrial membrane that is then used for ATP synthesis. The protein is Cytochrome b (MT-CYB) of Elapsoidea nigra (Usambara garter snake).